The primary structure comprises 144 residues: Putative pre-16S rRNA nuclease (144 aa).

It belongs to the YqgF nuclease family.

The protein resides in the cytoplasm. Could be a nuclease involved in processing of the 5'-end of pre-16S rRNA. This Symbiobacterium thermophilum (strain DSM 24528 / JCM 14929 / IAM 14863 / T) protein is Putative pre-16S rRNA nuclease.